The sequence spans 192 residues: MSEQTQQQNSEEAVENVEAVETVETVGNADGVQEQAAAEPAYEDLQARIAELEAQLKDEQLRALANEQNLRRRHQQEIADTHKFAGQKFAVEMLPVKDYLEMALLDQSGNFDALKMGVQMTLNELQKAFDATQIKEINPKAGDKLDPNIHQAMQAVASEQEPNTVVGVMKKGYTLSDRVLRPAMVTVARKEA.

Belongs to the GrpE family. In terms of assembly, homodimer.

The protein localises to the cytoplasm. Its function is as follows. Participates actively in the response to hyperosmotic and heat shock by preventing the aggregation of stress-denatured proteins, in association with DnaK and GrpE. It is the nucleotide exchange factor for DnaK and may function as a thermosensor. Unfolded proteins bind initially to DnaJ; upon interaction with the DnaJ-bound protein, DnaK hydrolyzes its bound ATP, resulting in the formation of a stable complex. GrpE releases ADP from DnaK; ATP binding to DnaK triggers the release of the substrate protein, thus completing the reaction cycle. Several rounds of ATP-dependent interactions between DnaJ, DnaK and GrpE are required for fully efficient folding. The polypeptide is Protein GrpE (Neisseria gonorrhoeae (strain ATCC 700825 / FA 1090)).